A 179-amino-acid polypeptide reads, in one-letter code: Large ribosomal subunit protein uL5 (179 aa).

It belongs to the universal ribosomal protein uL5 family. In terms of assembly, part of the 50S ribosomal subunit; part of the 5S rRNA/L5/L18/L25 subcomplex. Contacts the 5S rRNA and the P site tRNA. Forms a bridge to the 30S subunit in the 70S ribosome.

This is one of the proteins that bind and probably mediate the attachment of the 5S RNA into the large ribosomal subunit, where it forms part of the central protuberance. In the 70S ribosome it contacts protein S13 of the 30S subunit (bridge B1b), connecting the 2 subunits; this bridge is implicated in subunit movement. Contacts the P site tRNA; the 5S rRNA and some of its associated proteins might help stabilize positioning of ribosome-bound tRNAs. This is Large ribosomal subunit protein uL5 from Nitratidesulfovibrio vulgaris (strain ATCC 29579 / DSM 644 / CCUG 34227 / NCIMB 8303 / VKM B-1760 / Hildenborough) (Desulfovibrio vulgaris).